Consider the following 352-residue polypeptide: Quinolinate synthase (352 aa).

Residues histidine 48 and serine 69 each contribute to the iminosuccinate site. Cysteine 114 serves as a coordination point for [4Fe-4S] cluster. Iminosuccinate-binding positions include 140–142 (YAN) and serine 157. A [4Fe-4S] cluster-binding site is contributed by cysteine 201. Iminosuccinate contacts are provided by residues 227–229 (HPE) and threonine 244. Cysteine 298 contacts [4Fe-4S] cluster.

It belongs to the quinolinate synthase family. Type 1 subfamily. The cofactor is [4Fe-4S] cluster.

The protein localises to the cytoplasm. The enzyme catalyses iminosuccinate + dihydroxyacetone phosphate = quinolinate + phosphate + 2 H2O + H(+). It participates in cofactor biosynthesis; NAD(+) biosynthesis; quinolinate from iminoaspartate: step 1/1. Its function is as follows. Catalyzes the condensation of iminoaspartate with dihydroxyacetone phosphate to form quinolinate. The sequence is that of Quinolinate synthase from Pseudomonas syringae pv. syringae (strain B728a).